Reading from the N-terminus, the 66-residue chain is Beta-toxin Chui2 (66 aa).

The LCN-type CS-alpha/beta domain maps to 1–66; the sequence is KEGYIVNSYT…VWPLKNKTCN (66 aa). Cystine bridges form between Cys12–Cys65, Cys16–Cys41, Cys25–Cys46, and Cys29–Cys48. Position 66 is an asparagine amide (Asn66).

It belongs to the long (4 C-C) scorpion toxin superfamily. Sodium channel inhibitor family. Beta subfamily. In terms of tissue distribution, expressed by the venom gland.

Its subcellular location is the secreted. In terms of biological role, beta toxins bind voltage-independently at site-4 of sodium channels (Nav) and shift the voltage of activation toward more negative potentials thereby affecting sodium channel activation and promoting spontaneous and repetitive firing. The chain is Beta-toxin Chui2 from Centruroides huichol (Scorpion).